The sequence spans 361 residues: uncharacterized protein (361 aa).

An ATP-binding site is contributed by glycine 33 to threonine 40.

The protein belongs to the archaeal ATPase family.

This is an uncharacterized protein from Methanocaldococcus jannaschii (strain ATCC 43067 / DSM 2661 / JAL-1 / JCM 10045 / NBRC 100440) (Methanococcus jannaschii).